The sequence spans 309 residues: Tagatose-6-phosphate kinase (309 aa).

This sequence belongs to the carbohydrate kinase PfkB family. LacC subfamily.

It carries out the reaction D-tagatofuranose 6-phosphate + ATP = D-tagatofuranose 1,6-bisphosphate + ADP + H(+). It participates in carbohydrate metabolism; D-tagatose 6-phosphate degradation; D-glyceraldehyde 3-phosphate and glycerone phosphate from D-tagatose 6-phosphate: step 1/2. This Streptococcus pneumoniae (strain Taiwan19F-14) protein is Tagatose-6-phosphate kinase.